The chain runs to 637 residues: Chaperone protein DnaK (637 aa).

Residue Thr-198 is modified to Phosphothreonine; by autocatalysis. A disordered region spans residues 600-637 (IAQQQAQAQQAQGADAGAQSKDDDVVDAEFEEVKDDKK). Residues 601–618 (AQQQAQAQQAQGADAGAQ) show a composition bias toward low complexity. Residues 623 to 637 (DVVDAEFEEVKDDKK) are compositionally biased toward acidic residues.

It belongs to the heat shock protein 70 family.

Acts as a chaperone. This chain is Chaperone protein DnaK, found in Vibrio parahaemolyticus serotype O3:K6 (strain RIMD 2210633).